The primary structure comprises 180 residues: Trichosurin (180 aa).

Positions 1-15 (MKLLLLSMGLALVCG) are cleaved as a signal peptide. Asn67 and Asn148 each carry an N-linked (GlcNAc...) asparagine glycan. Cysteines 87 and 180 form a disulfide.

The protein belongs to the calycin superfamily. Lipocalin family. As to quaternary structure, homodimer. In terms of tissue distribution, milk.

It localises to the secreted. In Trichosurus vulpecula (Brush-tailed possum), this protein is Trichosurin.